The primary structure comprises 460 residues: Nitrogenase iron-iron protein beta chain (460 aa).

[8Fe-7S] cluster-binding residues include Cys20, Cys45, Cys104, and Ser143.

It belongs to the NifD/NifK/NifE/NifN family. In terms of assembly, hexamer of two alpha, two beta, and two delta chains. It depends on [8Fe-7S] cluster as a cofactor.

The catalysed reaction is N2 + 8 reduced [2Fe-2S]-[ferredoxin] + 16 ATP + 16 H2O = H2 + 8 oxidized [2Fe-2S]-[ferredoxin] + 2 NH4(+) + 16 ADP + 16 phosphate + 6 H(+). This iron-iron protein is part of the nitrogenase complex that catalyzes the key enzymatic reactions in nitrogen fixation. Other nitrogenase complexes utilize a molybdenum-iron protein or a vanadium-iron protein. The protein is Nitrogenase iron-iron protein beta chain (anfK) of Rhodobacter capsulatus (Rhodopseudomonas capsulata).